Here is a 428-residue protein sequence, read N- to C-terminus: Histidine--tRNA ligase (428 aa).

Belongs to the class-II aminoacyl-tRNA synthetase family. Homodimer.

The protein resides in the cytoplasm. The catalysed reaction is tRNA(His) + L-histidine + ATP = L-histidyl-tRNA(His) + AMP + diphosphate + H(+). This chain is Histidine--tRNA ligase, found in Azotobacter vinelandii (strain DJ / ATCC BAA-1303).